The sequence spans 341 residues: Dihydroorotate dehydrogenase (quinone) (341 aa).

Residues 59-63 (AGLDK) and threonine 83 contribute to the FMN site. Lysine 63 is a substrate binding site. Residue 108–112 (NRMGF) participates in substrate binding. Asparagine 136 and asparagine 169 together coordinate FMN. Substrate is bound at residue asparagine 169. Residue serine 172 is the Nucleophile of the active site. Asparagine 174 lines the substrate pocket. Positions 214 and 242 each coordinate FMN. Residue 243-244 (NT) participates in substrate binding. FMN-binding positions include glycine 265, glycine 294, and 315-316 (YS).

It belongs to the dihydroorotate dehydrogenase family. Type 2 subfamily. In terms of assembly, monomer. FMN serves as cofactor.

The protein resides in the cell membrane. It catalyses the reaction (S)-dihydroorotate + a quinone = orotate + a quinol. The protein operates within pyrimidine metabolism; UMP biosynthesis via de novo pathway; orotate from (S)-dihydroorotate (quinone route): step 1/1. In terms of biological role, catalyzes the conversion of dihydroorotate to orotate with quinone as electron acceptor. The polypeptide is Dihydroorotate dehydrogenase (quinone) (Neisseria meningitidis serogroup C (strain 053442)).